A 200-amino-acid chain; its full sequence is Prostamide/prostaglandin F synthase (200 aa).

The protein belongs to the peroxiredoxin-like PRXL2 family. Prostamide/prostaglandin F synthase subfamily.

It localises to the cytoplasm. The protein localises to the cytosol. The catalysed reaction is prostaglandin H2 + [thioredoxin]-dithiol = prostaglandin F2alpha + [thioredoxin]-disulfide. The enzyme catalyses prostamide F2alpha + [thioredoxin]-disulfide = prostamide H2 + [thioredoxin]-dithiol. Catalyzes the reduction of prostaglandin-ethanolamide H(2) (prostamide H(2)) to prostamide F(2alpha) with NADPH as proton donor. Also able to reduce prostaglandin H(2) to prostaglandin F(2alpha). This Salmo salar (Atlantic salmon) protein is Prostamide/prostaglandin F synthase (prxl2b).